The sequence spans 7096 residues: MESLVPGFNEKTHVQLSLPVLQVRDVLVRGFGDSVEEVLSEARQHLKDGTCGLVEVEKGVLPQLEQPYVFIKRSDARTAPHGHVMVELVAELEGIQYGRSGETLGVLVPHVGEIPVAYRKVLLRKNGNKGAGGHSYGADLKSFDLGDELGTDPYEDFQENWNTKHSSGVTRELMRELNGGAYTRYVDNNFCGPDGYPLECIKDLLARAGKASCTLSEQLDFIDTKRGVYCCREHEHEIAWYTERSEKSYELQTPFEIKLAKKFDTFNGECPNFVFPLNSIIKTIQPRVEKKKLDGFMGRIRSVYPVASPNECNQMCLSTLMKCDHCGETSWQTGDFVKATCEFCGTENLTKEGATTCGYLPQNAVVKIYCPACHNSEVGPEHSLAEYHNESGLKTILRKGGRTIAFGGCVFSYVGCHNKCAYWVPRASANIGCNHTGVVGEGSEGLNDNLLEILQKEKVNINIVGDFKLNEEIAIILASFSASTSAFVETVKGLDYKAFKQIVESCGNFKVTKGKAKKGAWNIGEQKSILSPLYAFASEAARVVRSIFSRTLETAQNSVRVLQKAAITILDGISQYSLRLIDAMMFTSDLATNNLVVMAYITGGVVQLTSQWLTNIFGTVYEKLKPVLDWLEEKFKEGVEFLRDGWEIVKFISTCACEIVGGQIVTCAKEIKESVQTFFKLVNKFLALCADSIIIGGAKLKALNLGETFVTHSKGLYRKCVKSREETGLLMPLKAPKEIIFLEGETLPTEVLTEEVVLKTGDLQPLEQPTSEAVEAPLVGTPVCINGLMLLEIKDTEKYCALAPNMMVTNNTFTLKGGAPTKVTFGDDTVIEVQGYKSVNITFELDERIDKVLNEKCSAYTVELGTEVNEFACVVADAVIKTLQPVSELLTPLGIDLDEWSMATYYLFDESGEFKLASHMYCSFYPPDEDEEEGDCEEEEFEPSTQYEYGTEDDYQGKPLEFGATSAALQPEEEQEEDWLDDDSQQTVGQQDGSEDNQTTTIQTIVEVQPQLEMELTPVVQTIEVNSFSGYLKLTDNVYIKNADIVEEAKKVKPTVVVNAANVYLKHGGGVAGALNKATNNAMQVESDDYIATNGPLKVGGSCVLSGHNLAKHCLHVVGPNVNKGEDIQLLKSAYENFNQHEVLLAPLLSAGIFGADPIHSLRVCVDTVRTNVYLAVFDKNLYDKLVSSFLEMKSEKQVEQKIAEIPKEEVKPFITESKPSVEQRKQDDKKIKACVEEVTTTLEETKFLTENLLLYIDINGNLHPDSATLVSDIDITFLKKDAPYIVGDVVQEGVLTAVVIPTKKAGGTTEMLAKALRKVPTDNYITTYPGQGLNGYTVEEAKTVLKKCKSAFYILPSIISNEKQEILGTVSWNLREMLAHAEETRKLMPVCVETKAIVSTIQRKYKGIKIQEGVVDYGARFYFYTSKTTVASLINTLNDLNETLVTMPLGYVTHGLNLEEAARYMRSLKVPATVSVSSPDAVTAYNGYLTSSSKTPEEHFIETISLAGSYKDWSYSGQSTQLGIEFLKRGDKSVYYTSNPTTFHLDGEVITFDNLKTLLSLREVRTIKVFTTVDNINLHTQVVDMSMTYGQQFGPTYLDGADVTKIKPHNSHEGKTFYVLPNDDTLRVEAFEYYHTTDPSFLGRYMSALNHTKKWKYPQVNGLTSIKWADNNCYLATALLTLQQIELKFNPPALQDAYYRARAGEAANFCALILAYCNKTVGELGDVRETMSYLFQHANLDSCKRVLNVVCKTCGQQQTTLKGVEAVMYMGTLSYEQFKKGVQIPCTCGKQATKYLVQQESPFVMMSAPPAQYELKHGTFTCASEYTGNYQCGHYKHITSKETLYCIDGALLTKSSEYKGPITDVFYKENSYTTTIKPVTYKLDGVVCTEIDPKLDNYYKKDNSYFTEQPIDLVPNQPYPNASFDNFKFVCDNIKFADDLNQLTGYKKPASRELKVTFFPDLNGDVVAIDYKHYTPSFKKGAKLLHKPIVWHVNNATNKATYKPNTWCIRCLWSTKPVETSNSFDVLKSEDAQGMDNLACEDLKPVSEEVVENPTIQKDVLECNVKTTEVVGDIILKPANNSLKITEEVGHTDLMAAYVDNSSLTIKKPNELSRVLGLKTLATHGLAAVNSVPWDTIANYAKPFLNKVVSTTTNIVTRCLNRVCTNYMPYFFTLLLQLCTFTRSTNSRIKASMPTTIAKNTVKSVGKFCLEASFNYLKSPNFSKLINIIIWFLLLSVCLGSLIYSTAALGVLMSNLGMPSYCTGYREGYLNSTNVTIATYCTGSIPCSVCLSGLDSLDTYPSLETIQITISSFKWDLTAFGLVAEWFLAYILFTRFFYVLGLAAIMQLFFSYFAVHFISNSWLMWLIINLVQMAPISAMVRMYIFFASFYYVWKSYVHVVDGCNSSTCMMCYKRNRATRVECTTIVNGVRRSFYVYANGGKGFCKLHNWNCVNCDTFCAGSTFISDEVARDLSLQFKRPINPTDQSSYIVDSVTVKNGSIHLYFDKAGQKTYERHSLSHFVNLDNLRANNTKGSLPINVIVFDGKSKCEESSAKSASVYYSQLMCQPILLLDQALVSDVGDSAEVAVKMFDAYVNTFSSTFNVPMEKLKTLVATAEAELAKNVSLDNVLSTFISAARQGFVDSDVETKDVVECLKLSHQSDIEVTGDSCNNYMLTYNKVENMTPRDLGACIDCSARHINAQVAKSHNIALIWNVKDFMSLSEQLRKQIRSAAKKNNLPFKLTCATTRQVVNVVTTKIALKGGKIVNNWLKQLIKVTLVFLFVAAIFYLITPVHVMSKHTDFSSEIIGYKAIDGGVTRDIASTDTCFANKHADFDTWFSQRGGSYTNDKACPLIAAVITREVGFVVPGLPGTILRTTNGDFLHFLPRVFSAVGNICYTPSKLIEYTDFATSACVLAAECTIFKDASGKPVPYCYDTNVLEGSVAYESLRPDTRYVLMDGSIIQFPNTYLEGSVRVVTTFDSEYCRHGTCERSEAGVCVSTSGRWVLNNDYYRSLPGVFCGVDAVNLLTNMFTPLIQPIGALDISASIVAGGIVAIVVTCLAYYFMRFRRAFGEYSHVVAFNTLLFLMSFTVLCLTPVYSFLPGVYSVIYLYLTFYLTNDVSFLAHIQWMVMFTPLVPFWITIAYIICISTKHFYWFFSNYLKRRVVFNGVSFSTFEEAALCTFLLNKEMYLKLRSDVLLPLTQYNRYLALYNKYKYFSGAMDTTSYREAACCHLAKALNDFSNSGSDVLYQPPQTSITSAVLQSGFRKMAFPSGKVEGCMVQVTCGTTTLNGLWLDDVVYCPRHVICTSEDMLNPNYEDLLIRKSNHNFLVQAGNVQLRVIGHSMQNCVLKLKVDTANPKTPKYKFVRIQPGQTFSVLACYNGSPSGVYQCAMRPNFTIKGSFLNGSCGSVGFNIDYDCVSFCYMHHMELPTGVHAGTDLEGNFYGPFVDRQTAQAAGTDTTITVNVLAWLYAAVINGDRWFLNRFTTTLNDFNLVAMKYNYEPLTQDHVDILGPLSAQTGIAVLDMCASLKELLQNGMNGRTILGSALLEDEFTPFDVVRQCSGVTFQSAVKRTIKGTHHWLLLTILTSLLVLVQSTQWSLFFFLYENAFLPFAMGIIAMSAFAMMFVKHKHAFLCLFLLPSLATVAYFNMVYMPASWVMRIMTWLDMVDTSLSGFKLKDCVMYASAVVLLILMTARTVYDDGARRVWTLMNVLTLVYKVYYGNALDQAISMWALIISVTSNYSGVVTTVMFLARGIVFMCVEYCPIFFITGNTLQCIMLVYCFLGYFCTCYFGLFCLLNRYFRLTLGVYDYLVSTQEFRYMNSQGLLPPKNSIDAFKLNIKLLGVGGKPCIKVATVQSKMSDVKCTSVVLLSVLQQLRVESSSKLWAQCVQLHNDILLAKDTTEAFEKMVSLLSVLLSMQGAVDINKLCEEMLDNRATLQAIASEFSSLPSYAAFATAQEAYEQAVANGDSEVVLKKLKKSLNVAKSEFDRDAAMQRKLEKMADQAMTQMYKQARSEDKRAKVTSAMQTMLFTMLRKLDNDALNNIINNARDGCVPLNIIPLTTAAKLMVVIPDYNTYKNTCDGTTFTYASALWEIQQVVDADSKIVQLSEISMDNSPNLAWPLIVTALRANSAVKLQNNELSPVALRQMSCAAGTTQTACTDDNALAYYNTTKGGRFVLALLSDLQDLKWARFPKSDGTGTIYTELEPPCRFVTDTPKGPKVKYLYFIKGLNNLNRGMVLGSLAATVRLQAGNATEVPANSTVLSFCAFAVDAAKAYKDYLASGGQPITNCVKMLCTHTGTGQAITVTPEANMDQESFGGASCCLYCRCHIDHPNPKGFCDLKGKYVQIPTTCANDPVGFTLKNTVCTVCGMWKGYGCSCDQLREPMLQSADAQSFLNRVCGVSAARLTPCGTGTSTDVVYRAFDIYNDKVAGFAKFLKTNCCRFQEKDEDDNLIDSYFVVKRHTFSNYQHEETIYNLLKDCPAVAKHDFFKFRIDGDMVPHISRQRLTKYTMADLVYALRHFDEGNCDTLKEILVTYNCCDDDYFNKKDWYDFVENPDILRVYANLGERVRQALLKTVQFCDAMRNAGIVGVLTLDNQDLNGNWYDFGDFIQTTPGSGVPVVDSYYSLLMPILTLTRALTAESHVDTDLTKPYIKWDLLKYDFTEERLKLFDRYFKYWDQTYHPNCVNCLDDRCILHCANFNVLFSTVFPPTSFGPLVRKIFVDGVPFVVSTGYHFRELGVVHNQDVNLHSSRLSFKELLVYAADPAMHAASGNLLLDKRTTCFSVAALTNNVAFQTVKPGNFNKDFYDFAVSKGFFKEGSSVELKHFFFAQDGNAAISDYDYYRYNLPTMCDIRQLLFVVEVVDKYFDCYDGGCINANQVIVNNLDKSAGFPFNKWGKARLYYDSMSYEDQDALFAYTKRNVIPTITQMNLKYAISAKNRARTVAGVSICSTMTNRQFHQKLLKSIAATRGATVVIGTSKFYGGWHNMLKTVYSDVENPHLMGWDYPKCDRAMPNMLRIMASLVLARKHTTCCSLSHRFYRLANECAQVLSEMVMCGGSLYVKPGGTSSGDATTAYANSVFNICQAVTANVNALLSTDGNKIADKYVRNLQHRLYECLYRNRDVDTDFVNEFYAYLRKHFSMMILSDDAVVCFNSTYASQGLVASIKNFKSVLYYQNNVFMSEAKCWTETDLTKGPHEFCSQHTMLVKQGDDYVYLPYPDPSRILGAGCFVDDIVKTDGTLMIERFVSLAIDAYPLTKHPNQEYADVFHLYLQYIRKLHDELTGHMLDMYSVMLTNDNTSRYWEPEFYEAMYTPHTVLQAVGACVLCNSQTSLRCGACIRRPFLCCKCCYDHVISTSHKLVLSVNPYVCNAPGCDVTDVTQLYLGGMSYYCKSHKPPISFPLCANGQVFGLYKNTCVGSDNVTDFNAIATCDWTNAGDYILANTCTERLKLFAAETLKATEETFKLSYGIATVREVLSDRELHLSWEVGKPRPPLNRNYVFTGYRVTKNSKVQIGEYTFEKGDYGDAVVYRGTTTYKLNVGDYFVLTSHTVMPLSAPTLVPQEHYVRITGLYPTLNISDEFSSNVANYQKVGMQKYSTLQGPPGTGKSHFAIGLALYYPSARIVYTACSHAAVDALCEKALKYLPIDKCSRIIPARARVECFDKFKVNSTLEQYVFCTVNALPETTADIVVFDEISMATNYDLSVVNARLRAKHYVYIGDPAQLPAPRTLLTKGTLEPEYFNSVCRLMKTIGPDMFLGTCRRCPAEIVDTVSALVYDNKLKAHKDKSAQCFKMFYKGVITHDVSSAINRPQIGVVREFLTRNPAWRKAVFISPYNSQNAVASKILGLPTQTVDSSQGSEYDYVIFTQTTETAHSCNVNRFNVAITRAKVGILCIMSDRDLYDKLQFTSLEIPRRNVATLQAENVTGLFKDCSKVITGLHPTQAPTHLSVDTKFKTEGLCVDIPGIPKDMTYRRLISMMGFKMNYQVNGYPNMFITREEAIRHVRAWIGFDVEGCHATREAVGTNLPLQLGFSTGVNLVAVPTGYVDTPNNTDFSRVSAKPPPGDQFKHLIPLMYKGLPWNVVRIKIVQMLSDTLKNLSDRVVFVLWAHGFELTSMKYFVKIGPERTCCLCDRRATCFSTASDTYACWHHSIGFDYVYNPFMIDVQQWGFTGNLQSNHDLYCQVHGNAHVASCDAIMTRCLAVHECFVKRVDWTIEYPIIGDELKINAACRKVQHMVVKAALLADKFPVLHDIGNPKAIKCVPQADVEWKFYDAQPCSDKAYKIEELFYSYATHSDKFTDGVCLFWNCNVDRYPANSIVCRFDTRVLSNLNLPGCDGGSLYVNKHAFHTPAFDKSAFVNLKQLPFFYYSDSPCESHGKQVVSDIDYVPLKSATCITRCNLGGAVCRHHANEYRLYLDAYNMMISAGFSLWVYKQFDTYNLWNTFTRLQSLENVAFNVVNKGHFDGQQGEVPVSIINNTVYTKVDGVDVELFENKTTLPVNVAFELWAKRNIKPVPEVKILNNLGVDIAANTVIWDYKRDAPAHISTIGVCSMTDIAKKPTETICAPLTVFFDGRVDGQVDLFRNARNGVLITEGSVKGLQPSVGPKQASLNGVTLIGEAVKTQFNYYKKVDGVVQQLPETYFTQSRNLQEFKPRSQMEIDFLELAMDEFIERYKLEGYAFEHIVYGDFSHSQLGGLHLLIGLAKRFKESPFELEDFIPMDSTVKNYFITDAQTGSSKCVCSVIDLLLDDFVEIIKSQDLSVVSKVVKVTIDYTEISFMLWCKDGHVETFYPKLQSSQAWQPGVAMPNLYKMQRMLLEKCDLQNYGDSATLPKGIMMNVAKYTQLCQYLNTLTLAVPYNMRVIHFGAGSDKGVAPGTAVLRQWLPTGTLLVDSDLNDFVSDADSTLIGDCATVHTANKWDLIISDMYDPKTKNVTKENDSKEGFFTYICGFIQQKLALGGSVAIKITEHSWNADLYKLMGHFAWWTAFVTNVNASSSEAFLIGCNYLGKPREQIDGYVMHANYIFWRNTNPIQLSSYSLFDMSKFPLKLRGTAVMSLKEGQINDMILSLLSKGRLIIRENNRVVISSDVLVNN.

Residues 1-147 (MESLVPGFNE…ADLKSFDLGD (147 aa)) are disordered. Residues 1–2225 (MESLVPGFNE…NYLKSPNFSK (2225 aa)) are Cytoplasmic-facing. The CoV Nsp1 globular domain occupies 12–127 (THVQLSLPVL…YRKVLLRKNG (116 aa)). Residues 148-179 (ELGTDPYEDFQENWNTKHSSGVTRELMRELNG) enclose the BetaCoV Nsp1 C-terminal domain. Residues 154 to 180 (YEDFQENWNTKHSSGVTRELMRELNGG) are binding to 40s ribosome mRNA entry channel. The 274-residue stretch at 183-456 (TRYVDNNFCG…NDNLLEILQK (274 aa)) folds into the CoV Nsp2 N-terminal domain. Zn(2+) contacts are provided by cysteine 200, cysteine 231, histidine 234, histidine 236, cysteine 323, cysteine 326, cysteine 341, cysteine 344, cysteine 370, cysteine 373, histidine 382, and cysteine 416. Residues 200 to 236 (CIKDLLARAGKASCTLSEQLDFIDTKRGVYCCREHEH) are C2H2. Residues 323–344 (CDHCGETSWQTGDFVKATCEFC) are C4. Positions 370-416 (CPACHNSEVGPEHSLAEYHNESGLKTILRKGGRTIAFGGCVFSYVGC) are C2HC. The CoV Nsp2 middle domain maps to 458 to 688 (KVNINIVGDF…FKLVNKFLAL (231 aa)). 2 LRR repeats span residues 545-569 (RSIF…AITI) and 697-719 (GAKL…LYRK). The region spanning 690 to 818 (ADSIIIGGAK…TNNTFTLKGG (129 aa)) is the CoV Nsp2 C-terminal domain. In terms of domain architecture, Ubiquitin-like 1 spans 821–929 (TKVTFGDDTV…MYCSFYPPDE (109 aa)). A disordered region spans residues 926 to 999 (PPDEDEEEGD…QQDGSEDNQT (74 aa)). Composition is skewed to acidic residues over residues 927-942 (PDED…EEFE) and 971-984 (PEEE…DDDS). 3 Macro domains span residues 1025–1194 (VNSF…LEMK), 1231–1359 (KIKA…LPSI), and 1367–1494 (ILGT…TSSS). The DPUP domain maps to 1496–1561 (TPEEHFIETI…TFDNLKTLLS (66 aa)). Residues 1565–1620 (VRTIKVFTTVDNINLHTQVVDMSMTYGQQFGPTYLDGADVTKIKPHNSHEGKTFYV) form the Ubiquitin-like 2 domain. Residues 1634-1898 (YYHTTDPSFL…CTEIDPKLDN (265 aa)) enclose the Peptidase C16 domain. The active-site For PL-PRO activity is cysteine 1674. The stretch at 1680 to 1702 (LLTLQQIELKFNPPALQDAYYRA) is one LRR 3 repeat. Zn(2+) contacts are provided by cysteine 1752, cysteine 1755, cysteine 1787, and cysteine 1789. The segment at 1752 to 1789 (CKTCGQQQTTLKGVEAVMYMGTLSYEQFKKGVQIPCTC) adopts a C4-type zinc-finger fold. Catalysis depends on for PL-PRO activity residues histidine 1835 and aspartate 1849. Residues 1911–2021 (PIDLVPNQPY…CLWSTKPVET (111 aa)) enclose the Nucleic acid-binding domain. In terms of domain architecture, G2M spans 2046–2155 (PVSEEVVENP…LNKVVSTTTN (110 aa)). A helical membrane pass occupies residues 2226–2246 (LINIIIWFLLLSVCLGSLIYS). Topologically, residues 2247 to 2317 (TAALGVLMSN…QITISSFKWD (71 aa)) are lumenal. Residues 2247 to 2317 (TAALGVLMSN…QITISSFKWD (71 aa)) enclose the 3Ecto domain. 2 cysteine pairs are disulfide-bonded: cysteine 2263-cysteine 2291 and cysteine 2282-cysteine 2288. Residues 2318–2338 (LTAFGLVAEWFLAYILFTRFF) traverse the membrane as a helical segment. At 2339–2775 (YVLGLAAIMQ…VNNWLKQLIK (437 aa)) the chain is on the cytoplasmic side. Residues 2395-2485 (KSYVHVVDGC…QFKRPINPTD (91 aa)) form a Y1 region. Residues 2395–2763 (KSYVHVVDGC…VTTKIALKGG (369 aa)) form the CoV Nsp3 Y domain. 8 residues coordinate Zn(2+): histidine 2399, cysteine 2404, cysteine 2409, cysteine 2412, cysteine 2445, histidine 2448, cysteine 2452, and cysteine 2455. The ZF1 stretch occupies residues 2399-2412 (HVVDGCNSSTCMMC). Residues 2445-2455 (CKLHNWNCVNC) form a ZF2 region. Residues 2486–2580 (QSSYIVDSVT…LLDQALVSDV (95 aa)) form a Y2 region. The segment at 2486-2763 (QSSYIVDSVT…VTTKIALKGG (278 aa)) is coV-Y. The Y3 stretch occupies residues 2581-2662 (GDSAEVAVKM…ECLKLSHQSD (82 aa)). The Y4 stretch occupies residues 2663–2763 (IEVTGDSCNN…VTTKIALKGG (101 aa)). The helical transmembrane segment at 2776-2796 (VTLVFLFVAAIFYLITPVHVM) threads the bilayer. Topologically, residues 2797–3044 (SKHTDFSSEI…IQPIGALDIS (248 aa)) are lumenal. Residues 3045–3065 (ASIVAGGIVAIVVTCLAYYFM) traverse the membrane as a helical segment. Over 3066-3099 (RFRRAFGEYSHVVAFNTLLFLMSFTVLCLTPVYS) the chain is Cytoplasmic. A helical transmembrane segment spans residues 3100–3120 (FLPGVYSVIYLYLTFYLTNDV). Residues 3121 to 3127 (SFLAHIQ) are Lumenal-facing. Residues 3128 to 3148 (WMVMFTPLVPFWITIAYIICI) form a helical membrane-spanning segment. Residues 3149–3586 (STKHFYWFFS…KGTHHWLLLT (438 aa)) lie on the Cytoplasmic side of the membrane. Residues 3165–3263 (VVFNGVSFST…QTSITSAVLQ (99 aa)) form the Nsp4C domain. The stretch at 3185 to 3206 (LNKEMYLKLRSDVLLPLTQYNR) is one LRR 4 repeat. Residues 3264-3569 (SGFRKMAFPS…VRQCSGVTFQ (306 aa)) enclose the Peptidase C30 domain. A Glycyl lysine isopeptide (Lys-Gly) (interchain with G-Cter in ubiquitin) cross-link involves residue lysine 3268. Histidine 3304 acts as the For 3CL-PRO activity in catalysis. Lysine 3353 is covalently cross-linked (Glycyl lysine isopeptide (Lys-Gly) (interchain with G-Cter in ubiquitin)). Catalysis depends on cysteine 3408, which acts as the Nucleophile; for 3CL-PRO activity. A helical membrane pass occupies residues 3587–3607 (ILTSLLVLVQSTQWSLFFFLY). A topological domain (lumenal) is located at residue glutamate 3608. A helical membrane pass occupies residues 3609–3629 (NAFLPFAMGIIAMSAFAMMFV). The Cytoplasmic portion of the chain corresponds to 3630-3634 (KHKHA). A helical transmembrane segment spans residues 3635 to 3655 (FLCLFLLPSLATVAYFNMVYM). The Lumenal portion of the chain corresponds to 3656 to 3673 (PASWVMRIMTWLDMVDTS). The chain crosses the membrane as a helical span at residues 3674–3694 (LSGFKLKDCVMYASAVVLLIL). The Cytoplasmic portion of the chain corresponds to 3695-3729 (MTARTVYDDGARRVWTLMNVLTLVYKVYYGNALDQ). Residues 3730-3750 (AISMWALIISVTSNYSGVVTT) traverse the membrane as a helical segment. At 3751–3778 (VMFLARGIVFMCVEYCPIFFITGNTLQC) the chain is on the lumenal side. Residues 3779–3799 (IMLVYCFLGYFCTCYFGLFCL) traverse the membrane as a helical segment. The Cytoplasmic segment spans residues 3800-7096 (LNRYFRLTLG…VISSDVLVNN (3297 aa)). Positions 3860-3942 (SKMSDVKCTS…EMLDNRATLQ (83 aa)) constitute a RdRp Nsp7 cofactor domain. The tract at residues 3931-4020 (CEEMLDNRAT…QMYKQARSED (90 aa)) is disordered. LRR repeat units follow at residues 3935-3959 (LDNR…AFAT) and 3977-4004 (LKKL…LEKM). In terms of domain architecture, RdRp Nsp8 cofactor spans 3943-4140 (AIASEFSSLP…LRANSAVKLQ (198 aa)). A Nsp9 ssRNA-binding domain is found at 4141–4253 (NNELSPVALR…GSLAATVRLQ (113 aa)). Residues 4254–4392 (AGNATEVPAN…CDQLREPMLQ (139 aa)) form the ExoN/MTase coactivator domain. Residues cysteine 4327, cysteine 4330, histidine 4336, cysteine 4343, cysteine 4370, cysteine 4373, cysteine 4381, and cysteine 4383 each contribute to the Zn(2+) site. The 255-residue stretch at 4399 to 4653 (FLNRVCGVSA…TAESHVDTDL (255 aa)) folds into the NiRAN domain. The stretch at 4591–4616 (AGIVGVLTLDNQDLNGNWYDFGDFIQ) is one LRR 7 repeat. Residues asparagine 4601 and aspartate 4610 each contribute to the Mn(2+) site. Residues 4658 to 4756 (IKWDLLKYDF…HNQDVNLHSS (99 aa)) enclose the Nsp12 Interface domain. Zn(2+)-binding residues include histidine 4687, cysteine 4693, cysteine 4698, cysteine 4702, and cysteine 4879. The region spanning 4757 to 5324 (RLSFKELLVY…AMYTPHTVLQ (568 aa)) is the Nsp12 RNA-dependent RNA polymerase domain. Positions 4759-4973 (SFKELLVYAA…HQKLLKSIAA (215 aa)) are rdRp Fingers N-ter. An interaction with RMP Remdesivir region spans residues 4937 to 4947 (KYAISAKNRAR). The interval 4974–5012 (TRGATVVIGTSKFYGGWHNMLKTVYSDVENPHLMGWDYP) is rdRp Palm N-ter. Residues 5004 to 5166 (PHLMGWDYPK…CFNSTYASQG (163 aa)) form the RdRp catalytic domain. Positions 5013 to 5071 (KCDRAMPNMLRIMASLVLARKHTTCCSLSHRFYRLANECAQVLSEMVMCGGSLYVKPGG) are rdRp Fingers C-ter. Zn(2+) contacts are provided by histidine 5034, cysteine 5037, and cysteine 5038. Residues 5072–5207 (TSSGDATTAY…TKGPHEFCSQ (136 aa)) form a rdRp Palm C-ter region. Residues serine 5151, aspartate 5152, and aspartate 5153 contribute to the active site. The segment at 5208-5324 (HTMLVKQGDD…AMYTPHTVLQ (117 aa)) is rdRp Thumb. Residues 5325 to 5437 (AVGACVLCNS…TDFNAIATCD (113 aa)) enclose the CV ZBD domain. Residues cysteine 5329, cysteine 5332, cysteine 5340, cysteine 5343, cysteine 5350, cysteine 5353, histidine 5357, histidine 5363, cysteine 5374, cysteine 5379, cysteine 5396, and histidine 5399 each contribute to the Zn(2+) site. An LRR 8 repeat occupies 5552–5572 (TSHTVMPLSAPTLVPQEHYVR). The (+)RNA virus helicase ATP-binding domain occupies 5581 to 5762 (NISDEFSSNV…MKTIGPDMFL (182 aa)). A ribonucleoside 5'-triphosphate is bound at residue 5606-5613 (GPPGTGKS). The (+)RNA virus helicase C-terminal domain occupies 5763 to 5932 (GTCRRCPAEI…TLQAENVTGL (170 aa)). Residues 5997–6212 (MFITREEAIR…RCLAVHECFV (216 aa)) enclose the ExoN domain. Catalysis depends on residues aspartate 6015, glutamate 6017, and glutamate 6116. The Mg(2+) site is built by aspartate 6015, glutamate 6017, and glutamate 6116. Zn(2+) is bound by residues cysteine 6132, cysteine 6135, cysteine 6151, histidine 6154, histidine 6182, cysteine 6186, and histidine 6189. Active-site residues include histidine 6193 and aspartate 6198. Residues histidine 6193 and aspartate 6198 each coordinate Mg(2+). Residue cysteine 6204 coordinates Zn(2+). The 232-residue stretch at 6221–6452 (YPIIGDELKI…NLWNTFTRLQ (232 aa)) folds into the N7-MTase domain. 6256-6262 (DIGNPKA) contacts S-adenosyl-L-methionine. The interval 6339-6353 (CDGGSLYVNKHAFHT) is gpppA-binding. Zn(2+) contacts are provided by cysteine 6377, cysteine 6402, cysteine 6409, and histidine 6412. Residues 6453–6513 (SLENVAFNVV…NVAFELWAKR (61 aa)) enclose the Nsp15 N-terminal oligomerization domain. Residues 6514-6639 (NIKPVPEVKI…YYKKVDGVVQ (126 aa)) enclose the AV-Nsp11N/CoV-Nsp15M domain. Residues 6656–6795 (KPRSQMEIDF…KDGHVETFYP (140 aa)) enclose the NendoU domain. Histidine 6686 functions as the Proton donor; for uridylate-specific endoribonuclease nsp15 activity in the catalytic mechanism. Histidine 6701 acts as the Proton acceptor; for uridylate-specific endoribonuclease nsp15 activity in catalysis. Lysine 6741 (for uridylate-specific endoribonuclease nsp15 activity) is an active-site residue. Residues 6741–6745 (KCVCS) and 6792–6796 (TFYPK) each bind uracil. The region spanning 6800-7094 (SQAWQPGVAM…RVVISSDVLV (295 aa)) is the Nidovirus-type SAM-dependent 2'-O-MTase domain. The stretch at 6817–6841 (RMLLEKCDLQNYGDSATLPKGIMMN) is one LRR 9 repeat. Active-site residues include lysine 6844, aspartate 6928, lysine 6968, and glutamate 7001.

The protein belongs to the coronaviruses polyprotein 1ab family. Interacts with host GIGYF2. As to quaternary structure, may form homohexamers. Interacts with N protein. In terms of assembly, 3CL-PRO exists as monomer and homodimer. Only the homodimer shows catalytic activity. Interacts with host FBXO22; this interaction promotes the proteasomal degradation of nsp5. Interacts with PL-PRO and nsp6. As to quaternary structure, forms homodimers. Interacts with host ZFYVE1 (DFCP1), which leads to ER and DMVs binding to lipid droplets. Interacts with host TBK1; this interaction decreases IRF3 phosphorylation by 57%, which leads to reduced IFN-beta production. In terms of assembly, interacts with nsp8 and nsp12 to form the replication-transcription complex (RTC): nsp12, nsp7, two subunits of nsp8, and up to two subunits of nsp13. Eight copies of nsp7 and eight copies of nsp8 assemble to form a heterohexadecamer dsRNA-encircling ring structure. Interacts with nsp7, nsp13 and nsp12 to form the replication-transcription complex (RTC): nsp12, nsp7, two subunits of nsp8, and up to two subunits of nsp13. Eight copies of nsp7 and eight copies of nsp8 assemble to form a heterohexadecamer dsRNA-encircling ring structure. As to quaternary structure, is a dimer. Interacts with NSP12. Interacts with host SND1. In terms of assembly, forms a dodecamer and interacts with nsp14 and nsp16; these interactions enhance nsp14 and nsp16 enzymatic activities. Interacts with nsp7 and nsp8 to form the replication-transcription complex (RTC): nsp12, nsp7, two subunits of nsp8, and up to two subunits of nsp13. Interacts with nsp9. As to quaternary structure, interacts with nsp8 to form the replication-transcription complex (RTC): nsp12, nsp7, two subunits of nsp8, and up to two subunits of nsp13. Interacts with host TBK1; this interaction inhibits TBK1 phosphorylation and decreases by 75% IRF3 phosphorylation, which leads to reduced IFN-beta production. In terms of assembly, interacts (via N-terminus) with DDX1. Interacts with nsp10. Homohexamer. As to quaternary structure, interacts with nsp10. Mn(2+) is required as a cofactor. It depends on Mg(2+) as a cofactor. In terms of processing, specific enzymatic cleavages in vivo by its own proteases yield mature proteins. 3CL-PRO and PL-PRO proteinases are autocatalytically processed.

It localises to the host cytoplasm. It is found in the host endosome. Its subcellular location is the host endoplasmic reticulum membrane. The protein localises to the host Golgi apparatus. The protein resides in the host nucleus. It localises to the host perinuclear region. It is found in the host endoplasmic reticulum. Its subcellular location is the host endoplasmic reticulum-Golgi intermediate compartment. The catalysed reaction is RNA(n) + a ribonucleoside 5'-triphosphate = RNA(n+1) + diphosphate. It carries out the reaction ATP + H2O = ADP + phosphate + H(+). It catalyses the reaction TSAVLQ-|-SGFRK-NH2 and SGVTFQ-|-GKFKK the two peptides corresponding to the two self-cleavage sites of the SARS 3C-like proteinase are the two most reactive peptide substrates. The enzyme exhibits a strong preference for substrates containing Gln at P1 position and Leu at P2 position.. The enzyme catalyses Thiol-dependent hydrolysis of ester, thioester, amide, peptide and isopeptide bonds formed by the C-terminal Gly of ubiquitin (a 76-residue protein attached to proteins as an intracellular targeting signal).. The catalysed reaction is a 5'-end (N(7)-methyl 5'-triphosphoguanosine)-ribonucleoside in mRNA + S-adenosyl-L-methionine = a 5'-end (N(7)-methyl 5'-triphosphoguanosine)-(2'-O-methyl-ribonucleoside) in mRNA + S-adenosyl-L-homocysteine + H(+). It carries out the reaction uridylyl-uridylyl-ribonucleotide-RNA = a 3'-end uridylyl-2',3'-cyclophospho-uridine-RNA + a 5'-end dephospho-ribonucleoside-RNA. It catalyses the reaction a 5'-end diphospho-ribonucleoside in mRNA + GTP + H(+) = a 5'-end (5'-triphosphoguanosine)-ribonucleoside in mRNA + diphosphate. The enzyme catalyses a 5'-end (5'-triphosphoguanosine)-ribonucleoside in mRNA + S-adenosyl-L-methionine = a 5'-end (N(7)-methyl 5'-triphosphoguanosine)-ribonucleoside in mRNA + S-adenosyl-L-homocysteine. Its activity is regulated as follows. Inhibited in vitro by GRL-0617. With respect to regulation, inhibited ex vivo by K22. It may shift NSP6 zippering activity towards the nuclear envelope, thereby impairing formation of the NSP6-compartment necessary for viral transcription/replication. Inhibited by Remdesivir antiviral drug (GS-5734). Its activity is regulated as follows. Inhibited by Remdesivir antiviral drug (GS-5734) through non-obligate RNA chain termination. With respect to regulation, inhibited by pyridone-containing alpha-ketoamides compounds 13a and 13b. In turn, alpha-ketoamide 13b (tert-butyl (1-((S)-1-(((S)-4-(benzylamino)-3,4-dioxo-1-((S)-2-oxopyrrolidin-3-yl)butan-2-yl)amino)-3-cyclopropyl-1-oxopropan-2-yl)-2-oxo-1,2-dihydropyridin-3-yl)carbamate) inhibits SARS-CoV-2 replication in human lung cells. Inhibited ex vivo by michael acceptor inhibitor N3. Inhibited ex vivo by compound 11a and 11b. Functionally, multifunctional protein involved in the transcription and replication of viral RNAs. Contains the proteinases responsible for the cleavages of the polyprotein. Inhibits host translation by associating with the open head conformation of the 40S subunit. The C-terminus binds to and obstructs ribosomal mRNA entry tunnel. Thereby inhibits antiviral response triggered by innate immunity or interferons. The nsp1-40S ribosome complex further induces an endonucleolytic cleavage near the 5'UTR of host mRNAs, targeting them for degradation. This inhibits the integrated stress response (ISR) in the infected cell by preventing EIF2S1/eIF2-alpha phosphorylation upstream of stress granule formation and depletes host G3BP1. Viral mRNAs less susceptible to nsp1-mediated inhibition of translation, because of their 5'-end leader sequence. Its function is as follows. Enhances mRNA repression of the 4EHP-GYF2 complex in the host, thereby inhibiting the antiviral response and facilitating SARS-CoV-2 replication. Possibly acts in cooperation with nsp1, which induces ribosome stalling on host mRNA, triggering mRNA repression by the host 4EHP-GYF2 complex which is enhanced by nsp2. In terms of biological role, responsible for the cleavages located at the N-terminus of the replicase polyprotein. Participates together with nsp4 in the assembly of virally-induced cytoplasmic double-membrane vesicles necessary for viral replication. Antagonizes innate immune induction of type I interferon by blocking the phosphorylation, dimerization and subsequent nuclear translocation of host IRF3. Also prevents host NF-kappa-B signaling. In addition, PL-PRO possesses a deubiquitinating/deISGylating activity and processes both 'Lys-48'- and 'Lys-63'-linked polyubiquitin chains from cellular substrates. Cleaves preferentially ISG15 from antiviral protein IFIH1 (MDA5), but not RIGI. Can play a role in host ADP-ribosylation by ADP-ribose. Plays a role in the formation and maintenance of double membrane vesicles (DMVs) replication organelles. DMVs are formed by nsp3 and nsp4, while nsp6 zippers ER membranes and connects to lipid droplets. Functionally, plays a role in the formation and maintenance of double membrane vesicles (DMVs) replication organelles. DMVs are formed by nsp3 and nsp4, while nsp6 zippers ER membranes and connects to lipid droplets. Cleaves the C-terminus of replicase polyprotein at 11 sites. Recognizes substrates containing the core sequence [ILMVF]-Q-|-[SGACN]. Cleaves and inactivates human TRMT1, preventing tRNA guanine(26)-dimethylation of tRNAs. May cleave human NLRP1 in lung epithelial cells, thereby activating the NLRP1 inflammasome pathway. May cleave human GSDMD, triggering alternative GSDME-mediated epithelial cell death upon activation of the NLRP1 inflammasome, which may enhance the release interleukins 1B, 6, 16 and 18. Also able to bind an ADP-ribose-1''-phosphate (ADRP). Its function is as follows. Plays a role in the formation and maintenance of double membrane vesicles (DMVs) replication organelles. DMVs are formed by nsp3 and nsp4, while nsp6 zippers ER membranes and connects to lipid droplets. LDs are consumed during DMV formation. Binds to host TBK1 without affecting TBK1 phosphorylation; the interaction with TBK1 decreases IRF3 phosphorylation, which leads to reduced IFN-beta production. In terms of biological role, plays a role in viral RNA synthesis. Forms a hexadecamer with nsp8 (8 subunits of each) that may participate in viral replication by acting as a primase. Alternatively, may synthesize substantially longer products than oligonucleotide primers. Functionally, plays a role in viral RNA synthesis. Forms a hexadecamer with nsp7 (8 subunits of each) that may participate in viral replication by acting as a primase. Alternatively, may synthesize substantially longer products than oligonucleotide primers. Interacts with ribosome signal recognition particle RNA (SRP). Together with NSP9, suppress protein integration into the cell membrane, thereby disrupting host immune defenses. Forms a primer, NSP9-pU, which is utilized by the polymerase for the initiation of RNA chains. Interacts with ribosome signal recognition particle RNA (SRP). Together with NSP8, suppress protein integration into the cell membrane, thereby disrupting host immune defenses. Its function is as follows. Plays a pivotal role in viral transcription by stimulating both nsp14 3'-5' exoribonuclease and nsp16 2'-O-methyltransferase activities. Therefore plays an essential role in viral mRNAs cap methylation. In terms of biological role, RNA-directed RNA polymerase that catalyzes the transcription of viral genomic and subgenomic RNAs. Acts in complex with nsp7 and nsp8 to transcribe both the minus and positive strands of genomic RNA. The kinase-like NiRAN domain of NSP12 attaches one or more nucleotides to the amino terminus of NSP9, forming a covalent RNA-protein intermediate that serves as transcription/replication primer. Subgenomic RNAs (sgRNAs) are formed by discontinuous transcription: The polymerase has the ability to pause at transcription-regulating sequences (TRS) and jump to the leader TRS, resulting in a major deletion. This creates a series of subgenomic RNAs that are replicated, transcribed and translated. In addition, Nsp12 is a subunit of the viral RNA capping enzyme that catalyzes the RNA guanylyltransferase reaction for genomic and sub-genomic RNAs. Subsequently, the NiRAN domain transfers RNA to GDP, and forms the core cap structure GpppA-RNA. Functionally, plays a role in viral RNA synthesis. Multi-functional protein with a zinc-binding domain in N-terminus displaying RNA and DNA duplex-unwinding activities with 5' to 3' polarity. Activity of helicase is dependent on magnesium. Binds to host TBK1 and inhibits TBK1 phosphorylation; the interaction with TBK1 decreases IRF3 phosphorylation, which leads to reduced IFN-beta production. Plays a role in viral RNA synthesis through two distinct activities. The N7-guanine methyltransferase activity plays a role in the formation of the cap structure GpppA-RNA. The proofreading exoribonuclease reduces the sensitivity of the virus to RNA mutagens during replication. This activity acts on both ssRNA and dsRNA in a 3'-5' direction. Its function is as follows. Plays a role in viral transcription/replication and prevents the simultaneous activation of host cell dsRNA sensors, such as MDA5/IFIH1, OAS, and PKR. Acts by degrading the 5'-polyuridines generated during replication of the poly(A) region of viral genomic and subgenomic RNAs. Catalyzes a two-step reaction in which a 2'3'-cyclic phosphate (2'3'-cP) is first generated by 2'-O transesterification, which is then hydrolyzed to a 3'-phosphate (3'-P). If not degraded, poly(U) RNA would hybridize with poly(A) RNA tails and activate host dsRNA sensors. May bind genomic dsRNA in association with the replication-transcription complex (RTC), and play a role in nsp12 discontinous transcription. In terms of biological role, methyltransferase that mediates mRNA cap 2'-O-ribose methylation to the 5'-cap structure of viral mRNAs. N7-methyl guanosine cap is a prerequisite for binding of nsp16. Therefore, it plays an essential role in cap methylation of viral mRNAs, which is essential to evade the immune system, especially when restricted by human IFIT1 and IFIT3. May disrupt host mRNA splicing in nucleus by interacting with pre-mRNA Recognition Domains of the U1 and U2 snRNAs. The polypeptide is Replicase polyprotein 1ab (rep) (Homo sapiens (Human)).